Here is a 245-residue protein sequence, read N- to C-terminus: 14-3-3 protein theta (245 aa).

This sequence belongs to the 14-3-3 family. In terms of assembly, homodimer, and heterodimer with other family members.

The protein resides in the cytoplasm. In terms of biological role, adapter protein implicated in the regulation of a large spectrum of both general and specialized signaling pathways. Binds to a large number of partners, usually by recognition of a phosphoserine or phosphothreonine motif. Binding generally results in the modulation of the activity of the binding partner. This chain is 14-3-3 protein theta (YWHAQ), found in Gallus gallus (Chicken).